Here is a 267-residue protein sequence, read N- to C-terminus: 2-oxo-hept-4-ene-1,7-dioate hydratase (267 aa).

Mg(2+)-binding residues include Glu-106, Glu-108, and Glu-139.

Belongs to the hydratase/decarboxylase family. In terms of assembly, homodecamer. It depends on Mg(2+) as a cofactor.

The enzyme catalyses (4Z)-2-oxohept-4-enedioate + H2O = (4S)-4-hydroxy-2-oxoheptanedioate. It participates in aromatic compound metabolism; 4-hydroxyphenylacetate degradation; pyruvate and succinate semialdehyde from 4-hydroxyphenylacetate: step 6/7. In terms of biological role, transforms 2-oxo-hept-4-ene-1,7-dioate (OHED) into 4-hydroxy-2-oxoheptanedioate, a step in the 4-hydroxyphenylacetic acid (4-HPA) degradation pathway. The sequence is that of 2-oxo-hept-4-ene-1,7-dioate hydratase from Escherichia coli.